Consider the following 772-residue polypeptide: Hyperosmolality-gated Ca2+ permeable channel 1.1 (772 aa).

The Extracellular portion of the chain corresponds to 1-5; it reads MATLK. Residues 6 to 28 form a helical membrane-spanning segment; it reads DIGVSAGINILTAFIFFIIFAFL. Residues 29-100 lie on the Cytoplasmic side of the membrane; the sequence is RLQPFNDRVY…AGLDSVVYLR (72 aa). Residues 101–122 traverse the membrane as a helical segment; sequence IYWLGLKIFAPIAMLAWAVLVP. At 123 to 159 the chain is on the extracellular side; that stretch reads VNWTNNELELAKHFKNVTSSDIDKLTISNIPEGSNRF. N138 is a glycosylation site (N-linked (GlcNAc) asparagine). Residues 160 to 180 traverse the membrane as a helical segment; that stretch reads WAHIIMAYAFTIWTCYMLMKE. Residues 181 to 372 are Cytoplasmic-facing; sequence YETVANMRLQ…PNLAIPYVSL (192 aa). A cytoplasmic region required for homodimerization region spans residues 339–344; the sequence is QTTQTR. Residues 373-398 form a helical membrane-spanning segment; it reads TVRRLVMNVAFFFLTFFFIIPIAFVQ. Residues 399–424 are Extracellular-facing; that stretch reads SLATIEGIEKVAPFLKVIIEKDFIKS. Residues 425–450 traverse the membrane as a helical segment; that stretch reads LIQGLLAGIALKLFLIFLPAILMTMS. The Cytoplasmic portion of the chain corresponds to 451–461; that stretch reads KFEGFTSVSFL. A helical transmembrane segment spans residues 462–485; the sequence is ERRSASRYYIFNLVNVFLGSVIAG. Topologically, residues 486 to 509 are extracellular; that stretch reads AAFEQLNSFLNQSPNQIPKTIGMA. The chain crosses the membrane as a helical span at residues 510–538; that stretch reads IPMKATFFITYIMVDGWAGVAGEILMLKP. Residues 539-566 are Cytoplasmic-facing; it reads LIIYHLKNAFLVKTEKDREEAMNPGSIG. A helical transmembrane segment spans residues 567–587; the sequence is FNTGEPQIQLYFLLGLVYAPV. A topological domain (extracellular) is located at residue T588. A helical transmembrane segment spans residues 589–606; that stretch reads PMLLPFILVFFALAYVVY. Residues 607–624 lie on the Cytoplasmic side of the membrane; it reads RHQIINVYNQEYESAAAF. The chain crosses the membrane as a helical span at residues 625-647; it reads WPDVHGRVITALIISQLLLMGLL. At 648-653 the chain is on the extracellular side; the sequence is GTKHAA. A helical membrane pass occupies residues 654–674; sequence SAAPFLIALPVITIGFHRFCK. Residues 675–772 are Cytoplasmic-facing; it reads GRFEPAFVRY…SLAVINGKEV (98 aa). Residues 686–688 form a cytoplasmic region required for homodimerization region; that stretch reads LQE. Residues 743 to 772 form a disordered region; it reads KRQSRRNTPAPSRISGESSPSLAVINGKEV. The segment covering 748-763 has biased composition (polar residues); the sequence is RNTPAPSRISGESSPS.

This sequence belongs to the CSC1 (TC 1.A.17) family. In terms of assembly, homodimer. Expressed in leaves, flowers, roots and guard cells.

It is found in the cell membrane. Its activity is regulated as follows. Activated by mechanical pressure. In terms of biological role, acts as a hyperosmolarity-gated non-selective cation channel that permeates Ca(2+) ions. Shows the following permeability sequence: K(+) &gt; Ba(2+) = Ca(2+) &gt; Na(+) = Mg(2+) = Cs(+). Mechanosensitive ion channel that converts mechanical stimuli into a flow of ions: activated in response to membrane stretch and poke. The chain is Hyperosmolality-gated Ca2+ permeable channel 1.1 from Arabidopsis thaliana (Mouse-ear cress).